We begin with the raw amino-acid sequence, 84 residues long: uncharacterized protein (84 aa).

The next 2 membrane-spanning stretches (helical) occupy residues 27–47 (INHH…LAML) and 52–72 (IGHV…FVLI).

This sequence to M.tuberculosis Rv2876.

Its subcellular location is the cell membrane. This is an uncharacterized protein from Mycobacterium leprae (strain TN).